The following is a 450-amino-acid chain: Tubulin beta-6 chain (450 aa).

Residues Gln-11, Glu-71, Ser-140, Gly-144, Thr-145, Gly-146, Asn-206, and Asn-228 each coordinate GTP. Residue Glu-71 coordinates Mg(2+). Residues 429-450 form a disordered region; the sequence is DATVEDEEEYEGEEGLDENYET. The span at 431–450 shows a compositional bias: acidic residues; that stretch reads TVEDEEEYEGEEGLDENYET.

The protein belongs to the tubulin family. As to quaternary structure, dimer of alpha and beta chains. A typical microtubule is a hollow water-filled tube with an outer diameter of 25 nm and an inner diameter of 15 nM. Alpha-beta heterodimers associate head-to-tail to form protofilaments running lengthwise along the microtubule wall with the beta-tubulin subunit facing the microtubule plus end conferring a structural polarity. Microtubules usually have 13 protofilaments but different protofilament numbers can be found in some organisms and specialized cells. The cofactor is Mg(2+).

The protein resides in the cytoplasm. It is found in the cytoskeleton. In terms of biological role, tubulin is the major constituent of microtubules, a cylinder consisting of laterally associated linear protofilaments composed of alpha- and beta-tubulin heterodimers. Microtubules grow by the addition of GTP-tubulin dimers to the microtubule end, where a stabilizing cap forms. Below the cap, tubulin dimers are in GDP-bound state, owing to GTPase activity of alpha-tubulin. The chain is Tubulin beta-6 chain from Gossypium hirsutum (Upland cotton).